The sequence spans 70 residues: uncharacterized protein (70 aa).

Residues 50-70 traverse the membrane as a helical segment; it reads FYLLVFFIILWVSREAFFYLI.

This sequence belongs to the M.jannaschii MJ0023/MJ0349/MJ1072/MJ1074/MJ1107/MJECL16 family.

Its subcellular location is the membrane. This is an uncharacterized protein from Methanocaldococcus jannaschii (strain ATCC 43067 / DSM 2661 / JAL-1 / JCM 10045 / NBRC 100440) (Methanococcus jannaschii).